Consider the following 488-residue polypeptide: GTPase Der (488 aa).

EngA-type G domains lie at 3-166 (PVVA…VSDG) and 201-374 (IKLA…QCAT). GTP is bound by residues 9-16 (GRPNVGKS), 56-60 (DTGGI), 118-121 (NKTD), 207-214 (GRPNVGKS), 254-258 (DTAGV), and 319-322 (NKWD). The 85-residue stretch at 375-459 (KRVSTALLTR…PIRIQFNEGA (85 aa)) folds into the KH-like domain.

This sequence belongs to the TRAFAC class TrmE-Era-EngA-EngB-Septin-like GTPase superfamily. EngA (Der) GTPase family. Associates with the 50S ribosomal subunit.

Its function is as follows. GTPase that plays an essential role in the late steps of ribosome biogenesis. This Sodalis glossinidius (strain morsitans) protein is GTPase Der.